Consider the following 485-residue polypeptide: Glutamyl-tRNA(Gln) amidotransferase subunit A (485 aa).

Active-site charge relay system residues include Lys78 and Ser153. The active-site Acyl-ester intermediate is the Ser177.

It belongs to the amidase family. GatA subfamily. In terms of assembly, heterotrimer of A, B and C subunits.

The enzyme catalyses L-glutamyl-tRNA(Gln) + L-glutamine + ATP + H2O = L-glutaminyl-tRNA(Gln) + L-glutamate + ADP + phosphate + H(+). Functionally, allows the formation of correctly charged Gln-tRNA(Gln) through the transamidation of misacylated Glu-tRNA(Gln) in organisms which lack glutaminyl-tRNA synthetase. The reaction takes place in the presence of glutamine and ATP through an activated gamma-phospho-Glu-tRNA(Gln). In Bacillus mycoides (strain KBAB4) (Bacillus weihenstephanensis), this protein is Glutamyl-tRNA(Gln) amidotransferase subunit A.